The sequence spans 499 residues: Tektin-like protein 1 (499 aa).

Phosphoserine is present on Ser14. The stretch at 201–225 (WEKKELKSMKRKMEKDMEISEDLLK) forms a coiled coil. The tract at residues 265–286 (VDITRPPTPRTQGLKTPPPDPI) is disordered. Positions 308–328 (KDILTEMAKNEVDIQNQQQEI) form a coiled coil. Tyr372 is modified (phosphotyrosine).

In terms of assembly, microtubule inner protein component of sperm flagellar doublet microtubules.

It is found in the cytoplasm. The protein localises to the cytoskeleton. The protein resides in the flagellum axoneme. Its function is as follows. Microtubule inner protein (MIP) part of the dynein-decorated doublet microtubules (DMTs) in sperm flagellar axoneme, which is required for motile flagellum beating. Forms an extensive interaction network cross-linking the lumen of axonemal doublet microtubules. In Mus musculus (Mouse), this protein is Tektin-like protein 1.